We begin with the raw amino-acid sequence, 178 residues long: Large ribosomal subunit protein uL5 (178 aa).

This sequence belongs to the universal ribosomal protein uL5 family. As to quaternary structure, part of the 50S ribosomal subunit; part of the 5S rRNA/L5/L18/L25 subcomplex. Contacts the 5S rRNA and the P site tRNA. Forms a bridge to the 30S subunit in the 70S ribosome.

Functionally, this is one of the proteins that bind and probably mediate the attachment of the 5S RNA into the large ribosomal subunit, where it forms part of the central protuberance. In the 70S ribosome it contacts protein S13 of the 30S subunit (bridge B1b), connecting the 2 subunits; this bridge is implicated in subunit movement. Contacts the P site tRNA; the 5S rRNA and some of its associated proteins might help stabilize positioning of ribosome-bound tRNAs. The polypeptide is Large ribosomal subunit protein uL5 (Acinetobacter baumannii (strain AB0057)).